A 335-amino-acid polypeptide reads, in one-letter code: Fructose-1,6-bisphosphatase class 1 (335 aa).

Mg(2+)-binding residues include Glu-90, Asp-113, Leu-115, and Asp-116. Substrate is bound by residues 116-119 (DGSS), Asn-209, Tyr-242, and Lys-272. Glu-278 is a binding site for Mg(2+).

It belongs to the FBPase class 1 family. In terms of assembly, homotetramer. The cofactor is Mg(2+).

The protein resides in the cytoplasm. The catalysed reaction is beta-D-fructose 1,6-bisphosphate + H2O = beta-D-fructose 6-phosphate + phosphate. Its pathway is carbohydrate biosynthesis; gluconeogenesis. This is Fructose-1,6-bisphosphatase class 1 from Histophilus somni (strain 2336) (Haemophilus somnus).